The primary structure comprises 348 residues: Aspartate carbamoyltransferase catalytic subunit (348 aa).

Arg59 and Thr60 together coordinate carbamoyl phosphate. L-aspartate is bound at residue Lys87. Carbamoyl phosphate contacts are provided by Arg109, His142, and Gln145. The L-aspartate site is built by Arg182 and Arg253. 2 residues coordinate carbamoyl phosphate: Gly294 and Pro295.

Belongs to the aspartate/ornithine carbamoyltransferase superfamily. ATCase family. Heterododecamer (2C3:3R2) of six catalytic PyrB chains organized as two trimers (C3), and six regulatory PyrI chains organized as three dimers (R2).

It carries out the reaction carbamoyl phosphate + L-aspartate = N-carbamoyl-L-aspartate + phosphate + H(+). It participates in pyrimidine metabolism; UMP biosynthesis via de novo pathway; (S)-dihydroorotate from bicarbonate: step 2/3. Its function is as follows. Catalyzes the condensation of carbamoyl phosphate and aspartate to form carbamoyl aspartate and inorganic phosphate, the committed step in the de novo pyrimidine nucleotide biosynthesis pathway. The polypeptide is Aspartate carbamoyltransferase catalytic subunit (Prochlorococcus marinus (strain MIT 9303)).